A 323-amino-acid polypeptide reads, in one-letter code: tRNA U34 carboxymethyltransferase (323 aa).

Carboxy-S-adenosyl-L-methionine is bound by residues lysine 91, tryptophan 105, lysine 110, glycine 130, 152–154 (DPT), 181–182 (IE), methionine 196, tyrosine 200, and arginine 315.

This sequence belongs to the class I-like SAM-binding methyltransferase superfamily. CmoB family. As to quaternary structure, homotetramer.

The catalysed reaction is carboxy-S-adenosyl-L-methionine + 5-hydroxyuridine(34) in tRNA = 5-carboxymethoxyuridine(34) in tRNA + S-adenosyl-L-homocysteine + H(+). Functionally, catalyzes carboxymethyl transfer from carboxy-S-adenosyl-L-methionine (Cx-SAM) to 5-hydroxyuridine (ho5U) to form 5-carboxymethoxyuridine (cmo5U) at position 34 in tRNAs. In Shigella dysenteriae serotype 1 (strain Sd197), this protein is tRNA U34 carboxymethyltransferase.